We begin with the raw amino-acid sequence, 356 residues long: Protein-arginine kinase (356 aa).

One can recognise a Phosphagen kinase C-terminal domain in the interval 24–254 (IVLSSRIRLA…MQLIQQERAA (231 aa)). ATP is bound by residues 27 to 31 (SSRIR), His-91, Arg-125, 176 to 180 (RASVM), and 207 to 212 (RGIYGE). Positions 337–342 (RDERRA) match the RDXXRA motif of the pArg binding pocket involved in allosteric regulation motif.

It belongs to the ATP:guanido phosphotransferase family.

The catalysed reaction is L-arginyl-[protein] + ATP = N(omega)-phospho-L-arginyl-[protein] + ADP + H(+). With respect to regulation, appears to be allosterically activated by the binding of pArg-containing polypeptides to the pArg-binding pocket localized in the C-terminal domain of McsB. Functionally, catalyzes the specific phosphorylation of arginine residues in a large number of proteins. Is part of the bacterial stress response system. Protein arginine phosphorylation has a physiologically important role and is involved in the regulation of many critical cellular processes, such as protein homeostasis, motility, competence, and stringent and stress responses, by regulating gene expression and protein activity. In Halalkalibacterium halodurans (strain ATCC BAA-125 / DSM 18197 / FERM 7344 / JCM 9153 / C-125) (Bacillus halodurans), this protein is Protein-arginine kinase.